Here is a 391-residue protein sequence, read N- to C-terminus: D-alanine--D-alanine ligase (391 aa).

Positions 1–24 (MSSENLPQSPERAESPQAPRRKPR) are disordered. Residues 171–381 (KRVFLSFGLP…YPELVDRLIQ (211 aa)) enclose the ATP-grasp domain. 207–262 (AGEHGWPLFIKPARGGSSMGITKVDSVEGLDAAIEEARRHDPKFLVESLLRGREIE) is an ATP binding site. 3 residues coordinate Mg(2+): Asp335, Glu348, and Asn350.

It belongs to the D-alanine--D-alanine ligase family. Mg(2+) is required as a cofactor. Mn(2+) serves as cofactor.

It localises to the cytoplasm. The catalysed reaction is 2 D-alanine + ATP = D-alanyl-D-alanine + ADP + phosphate + H(+). It functions in the pathway cell wall biogenesis; peptidoglycan biosynthesis. Functionally, cell wall formation. The protein is D-alanine--D-alanine ligase of Streptomyces griseus subsp. griseus (strain JCM 4626 / CBS 651.72 / NBRC 13350 / KCC S-0626 / ISP 5235).